We begin with the raw amino-acid sequence, 227 residues long: ATP-dependent dethiobiotin synthetase BioD (227 aa).

Aspartate 13–tyrosine 18 serves as a coordination point for ATP. Mg(2+) is bound at residue threonine 17. The active site involves lysine 38. Serine 42 serves as a coordination point for substrate. ATP contacts are provided by residues aspartate 55, glutamate 116–glycine 119, and asparagine 179–asparagine 180. The Mg(2+) site is built by aspartate 55 and glutamate 116.

Belongs to the dethiobiotin synthetase family. In terms of assembly, homodimer. Mg(2+) serves as cofactor.

It localises to the cytoplasm. It catalyses the reaction (7R,8S)-7,8-diammoniononanoate + CO2 + ATP = (4R,5S)-dethiobiotin + ADP + phosphate + 3 H(+). The protein operates within cofactor biosynthesis; biotin biosynthesis; biotin from 7,8-diaminononanoate: step 1/2. Functionally, catalyzes a mechanistically unusual reaction, the ATP-dependent insertion of CO2 between the N7 and N8 nitrogen atoms of 7,8-diaminopelargonic acid (DAPA, also called 7,8-diammoniononanoate) to form a ureido ring. This is ATP-dependent dethiobiotin synthetase BioD from Clostridium botulinum (strain Langeland / NCTC 10281 / Type F).